We begin with the raw amino-acid sequence, 205 residues long: Guanylate kinase (205 aa).

The Guanylate kinase-like domain maps to 7–185 (GNIFIISAAS…AEEDLRHIVN (179 aa)). ATP is bound at residue 14–21 (AASGTGKT).

Belongs to the guanylate kinase family.

The protein resides in the cytoplasm. The catalysed reaction is GMP + ATP = GDP + ADP. Functionally, essential for recycling GMP and indirectly, cGMP. The chain is Guanylate kinase (gmk) from Neisseria meningitidis serogroup B (strain ATCC BAA-335 / MC58).